The chain runs to 547 residues: Membrane transporter D1 (547 aa).

Topologically, residues 1–2 are cytoplasmic; that stretch reads MR. A helical transmembrane segment spans residues 3–25; sequence ASVMLCAALGGFLFGYDTGVINA. The Extracellular portion of the chain corresponds to 26–43; it reads ALFQMKDHFGFSEHSWQY. Residues 44-64 form a helical membrane-spanning segment; sequence ALIVAIAIAGAFVGAFISGFI. Residues 65-78 are Cytoplasmic-facing; sequence SAAFGRRPCIAVAD. A helical membrane pass occupies residues 79–99; the sequence is ALFVIGSVLMGAAPNVEVVLV. Topologically, residues 100 to 101 are extracellular; the sequence is SR. The chain crosses the membrane as a helical span at residues 102–122; it reads VIVGLAIGISSATIPVYLAEV. Topologically, residues 123–136 are cytoplasmic; that stretch reads TSPKHRGATIVLNN. Residues 137-157 form a helical membrane-spanning segment; sequence LFLTGGQFVAAGFTAIMVVFT. Topologically, residues 158–164 are extracellular; that stretch reads SKNIGWR. Residues 165–185 traverse the membrane as a helical segment; the sequence is VAIGIGALPAVVQAFCLLFFL. At 186 to 245 the chain is on the cytoplasmic side; sequence PESPRWLLSKGHADRAKAVADKFEVDLCEFQEGDELPSVRIDYRPLMARDMRFRVVLSSG. The chain crosses the membrane as a helical span at residues 246–266; that stretch reads LQIIQQFSGINTIMYYSSVIL. The Extracellular portion of the chain corresponds to 267 to 276; the sequence is YDAGFRDAIM. A helical membrane pass occupies residues 277-297; that stretch reads PVVLSIPLAFMNALFTAVAIF. At 298–308 the chain is on the cytoplasmic side; that stretch reads TVDRFGRRRML. Residues 309–329 traverse the membrane as a helical segment; the sequence is LISVFGCLVLLVVIAIIGFFI. Residues 330–339 are Extracellular-facing; it reads GTRISYSVGG. The helical transmembrane segment at 340 to 360 threads the bilayer; it reads GLFLALLAVFLALYAPGIGCI. Residues 361 to 385 lie on the Cytoplasmic side of the membrane; sequence PWVIMGEIFPTHLRTSAASVATMAN. Residues 386-406 traverse the membrane as a helical segment; sequence WGANVLVSQVFPILMGAIGVG. A topological domain (extracellular) is located at residue G407. Residues 408 to 428 form a helical membrane-spanning segment; that stretch reads TFTIISGLMALGCIFVYFFAV. Topologically, residues 429-547 are cytoplasmic; that stretch reads ETKGLTLEQI…AIKAAPHEPK (119 aa). 2 disordered regions span residues 449-468 and 510-547; these read PPRF…YRED and VSNK…HEPK. Over residues 519-529 the composition is skewed to polar residues; that stretch reads TSSSSDPQSLE.

It belongs to the major facilitator superfamily. Sugar transporter (TC 2.A.1.1) family.

The protein resides in the membrane. This Leishmania donovani protein is Membrane transporter D1.